Reading from the N-terminus, the 584-residue chain is Protein DENND6A (584 aa).

A disordered region spans residues 1–23 (MALWERGAGGAAEAGEDATEEPE). The region spanning 39-218 (HCVCVVGFDL…KLRIPTYRDK (180 aa)) is the uDENN domain. A cDENN domain is found at 244 to 369 (EVDLFRCFCP…VKVKKLKNLK (126 aa)). One can recognise a dDENN domain in the interval 371 to 504 (LDSKPGVYTS…RSRQKEMTQN (134 aa)).

Belongs to the DENND6 family.

Its subcellular location is the recycling endosome. It is found in the cytoplasm. Functionally, guanine nucleotide exchange factor (GEF) for RAB14. The protein is Protein DENND6A (DENND6A) of Gallus gallus (Chicken).